A 235-amino-acid chain; its full sequence is Sugar fermentation stimulation protein homolog (235 aa).

It belongs to the SfsA family.

The sequence is that of Sugar fermentation stimulation protein homolog from Aliivibrio salmonicida (strain LFI1238) (Vibrio salmonicida (strain LFI1238)).